We begin with the raw amino-acid sequence, 458 residues long: Protein amnionless (458 aa).

Positions 1 to 19 (MGALGRVLLWLQLCAMTRA) are cleaved as a signal peptide. At 20 to 362 (AYKLWVPNTS…ELNQSSSGAG (343 aa)) the chain is on the extracellular side. Asn27 is a glycosylation site (N-linked (GlcNAc...) asparagine). 6 disulfides stabilise this stretch: Cys43–Cys96, Cys137–Cys213, Cys205–Cys211, Cys223–Cys249, Cys234–Cys250, and Cys239–Cys253. Residues 67–87 (SDMLLPLDGELVLASGAALSA) are interaction with CUBN. Residues 203-254 (QACTDASGCVCGNAEMLPWICASLLQPLGGRCPQAACQDPLLPQGQCCDLCG) form the VWFC domain. Asn355 carries an N-linked (GlcNAc...) asparagine glycan. Residues 363-383 (LAGGVAALVLLALLGTVLLLL) form a helical membrane-spanning segment. Residues 384 to 458 (HRSGRLRWRR…LFAGEAEAEA (75 aa)) are Cytoplasmic-facing.

As to quaternary structure, interacts (via extracellular region) with CUBN/cubilin. This gives rise to a huge complex containing one AMN chain and three CUBN chains. N-glycosylated. Post-translationally, a soluble form arises by proteolytic removal of the membrane anchor. As to expression, expressed in polarized epithelial cells which are specialized in resorption or transport, specifically kidney proximal tubules and intestinal epithelium.

Its subcellular location is the apical cell membrane. It is found in the cell membrane. The protein resides in the endosome membrane. It localises to the membrane. The protein localises to the coated pit. Its function is as follows. Membrane-bound component of the endocytic receptor formed by AMN and CUBN. Required for normal CUBN glycosylation and trafficking to the cell surface. The complex formed by AMN and CUBN is required for efficient absorption of vitamin B12. Required for normal CUBN-mediated protein transport in the kidney. The polypeptide is Protein amnionless (Amn) (Mus musculus (Mouse)).